The following is a 360-amino-acid chain: Cell division protein DivIB (360 aa).

The segment at 1 to 54 (MTEKDSNVEESVLEVEQASQVELDSEQISPAEKESVLAEEKEFSTDVDIPEMTA) is disordered. The Cytoplasmic segment spans residues 1-139 (MTEKDSNVEE…VDIPSKVVWK (139 aa)). Residues 17–28 (QASQVELDSEQI) are compositionally biased toward polar residues. The span at 31-44 (AEKESVLAEEKEFS) shows a compositional bias: basic and acidic residues. A helical membrane pass occupies residues 140-160 (AIPVLVTSLLLAALALYFISP). Over 161–360 (TSKKKQIEVV…MEVGIYRYAS (200 aa)) the chain is Extracellular. Residues 162 to 233 (SKKKQIEVVG…ATFTIHIKEY (72 aa)) enclose the POTRA domain.

Belongs to the FtsQ/DivIB family. DivIB subfamily.

It localises to the cell membrane. In terms of biological role, cell division protein that may be involved in stabilizing or promoting the assembly of the division complex. This Streptococcus suis (strain GZ1) protein is Cell division protein DivIB.